We begin with the raw amino-acid sequence, 365 residues long: MDDTRSYDIAWLPGDGIGPEVTREALRVLEAVGSAHGFSVTATEHRMGGVALDETGMPLPDSTRDACLESDAVLLGAVGGPKWADNTGDQRPESGLLALRKALGVYANLRPVRVPAALADASPLRPDRVGGTDILFVRELTGGIYFGTPEGRTDDGARSTMAYSDDEIERIAHVAFQRARRRDGNVTSVDKANVLEVSELWREVVTEVHDDCPDVTLRHLYVDNAAMQVVRDPRQFDVVLTGNLFGDILSDLAAALPGSLGLLPSASVGGTVGLFEPVHGSAPDIAGQDVANPTAAILSAALLLDEVGETAAADAVRHGVDAALDAGFRTADLAADNEEDASTSAFGREVATRAADSVPQNAPTP.

80–93 contributes to the NAD(+) binding site; that stretch reads GPKWADNTGDQRPE. Residues arginine 100, arginine 110, arginine 138, and aspartate 223 each coordinate substrate. Positions 223, 247, and 251 each coordinate Mg(2+). NAD(+) is bound at residue 280–292; sequence GSAPDIAGQDVAN. The segment at 337–365 is disordered; it reads NEEDASTSAFGREVATRAADSVPQNAPTP.

The protein belongs to the isocitrate and isopropylmalate dehydrogenases family. LeuB type 1 subfamily. As to quaternary structure, homodimer. Mg(2+) serves as cofactor. Mn(2+) is required as a cofactor.

It localises to the cytoplasm. The enzyme catalyses (2R,3S)-3-isopropylmalate + NAD(+) = 4-methyl-2-oxopentanoate + CO2 + NADH. The protein operates within amino-acid biosynthesis; L-leucine biosynthesis; L-leucine from 3-methyl-2-oxobutanoate: step 3/4. Its function is as follows. Catalyzes the oxidation of 3-carboxy-2-hydroxy-4-methylpentanoate (3-isopropylmalate) to 3-carboxy-4-methyl-2-oxopentanoate. The product decarboxylates to 4-methyl-2 oxopentanoate. The chain is 3-isopropylmalate dehydrogenase from Salinibacter ruber (strain DSM 13855 / M31).